Consider the following 213-residue polypeptide: Glutathione S-transferase PARB (213 aa).

The GST N-terminal domain occupies 1 to 82 (MAIKVHGSPM…YIAHVYADNG (82 aa)). Glutathione is bound by residues S11, 12-13 (TA), 40-41 (HK), 53-54 (QV), and 66-67 (ES). Residues 89–213 (DPKKMPSMSV…WVKGLEKLQK (125 aa)) form the GST C-terminal domain.

It belongs to the GST superfamily. Phi family.

The enzyme catalyses RX + glutathione = an S-substituted glutathione + a halide anion + H(+). Functionally, conjugation of reduced glutathione to a wide number of exogenous and endogenous hydrophobic electrophiles. This chain is Glutathione S-transferase PARB, found in Nicotiana tabacum (Common tobacco).